A 72-amino-acid polypeptide reads, in one-letter code: Cell division protein ZapB (72 aa).

The stretch at 1–72 (MSSEILDQLE…RSLLGQIDNV (72 aa)) forms a coiled coil.

It belongs to the ZapB family. In terms of assembly, homodimer. The ends of the coiled-coil dimer bind to each other, forming polymers. Interacts with FtsZ.

It is found in the cytoplasm. Its function is as follows. Non-essential, abundant cell division factor that is required for proper Z-ring formation. It is recruited early to the divisome by direct interaction with FtsZ, stimulating Z-ring assembly and thereby promoting cell division earlier in the cell cycle. Its recruitment to the Z-ring requires functional FtsA or ZipA. This is Cell division protein ZapB from Actinobacillus succinogenes (strain ATCC 55618 / DSM 22257 / CCUG 43843 / 130Z).